The sequence spans 129 residues: Holo-[acyl-carrier-protein] synthase (129 aa).

2 residues coordinate Mg(2+): Asp8 and Glu58.

The protein belongs to the P-Pant transferase superfamily. AcpS family. Requires Mg(2+) as cofactor.

Its subcellular location is the cytoplasm. The enzyme catalyses apo-[ACP] + CoA = holo-[ACP] + adenosine 3',5'-bisphosphate + H(+). In terms of biological role, transfers the 4'-phosphopantetheine moiety from coenzyme A to a Ser of acyl-carrier-protein. This Acidithiobacillus ferrooxidans (strain ATCC 53993 / BNL-5-31) (Leptospirillum ferrooxidans (ATCC 53993)) protein is Holo-[acyl-carrier-protein] synthase.